The sequence spans 378 residues: MNHSDTLSLSLELLQQPSVTPIDHTCQTIMADRLAKVGFHIEPMRFGDVDNLWARRGTEGPVFCFAGHTDVVPTGRLDAWNSDPFAPEIRDGKLYGRGSADMKTALAAMVVASERFVAKHPNHKGSIAFLITSDEEGPAVNGTVKVIETLEKRNEKITWCLVGEPSSTHKLGDIVKNGRRGSLNAVLKVQGKQGHVAYPHLARNPIHEASPALAELCQTVWDNGNEYFPATSFQISNIHAGTGATNVIPGALEVTFNFRYSTEVTAEQLKQRVHEILDKHGLQYEIVWNLSGLPFLTPVGELVNAAQTAILNVTGTETELSTSGGTSDGRFIAPTGAQVLELGVLNATIHQINEHVDVHDLDPLTDIYEQILENLLAQ.

Histidine 68 provides a ligand contact to Zn(2+). Residue aspartate 70 is part of the active site. Aspartate 101 lines the Zn(2+) pocket. The Proton acceptor role is filled by glutamate 135. Zn(2+) is bound by residues glutamate 136, glutamate 164, and histidine 350.

Belongs to the peptidase M20A family. DapE subfamily. In terms of assembly, homodimer. Requires Zn(2+) as cofactor. The cofactor is Co(2+).

It catalyses the reaction N-succinyl-(2S,6S)-2,6-diaminopimelate + H2O = (2S,6S)-2,6-diaminopimelate + succinate. It functions in the pathway amino-acid biosynthesis; L-lysine biosynthesis via DAP pathway; LL-2,6-diaminopimelate from (S)-tetrahydrodipicolinate (succinylase route): step 3/3. Its function is as follows. Catalyzes the hydrolysis of N-succinyl-L,L-diaminopimelic acid (SDAP), forming succinate and LL-2,6-diaminopimelate (DAP), an intermediate involved in the bacterial biosynthesis of lysine and meso-diaminopimelic acid, an essential component of bacterial cell walls. In Acinetobacter baumannii (strain ATCC 17978 / DSM 105126 / CIP 53.77 / LMG 1025 / NCDC KC755 / 5377), this protein is Succinyl-diaminopimelate desuccinylase.